A 597-amino-acid polypeptide reads, in one-letter code: Medium/long-chain-fatty-acid--CoA ligase FadD6 (597 aa).

This sequence belongs to the ATP-dependent AMP-binding enzyme family.

The enzyme catalyses a medium-chain fatty acid + ATP + CoA = a medium-chain fatty acyl-CoA + AMP + diphosphate. The catalysed reaction is a long-chain fatty acid + ATP + CoA = a long-chain fatty acyl-CoA + AMP + diphosphate. It carries out the reaction hexanoate + ATP + CoA = hexanoyl-CoA + AMP + diphosphate. It catalyses the reaction octanoate + ATP + CoA = octanoyl-CoA + AMP + diphosphate. The enzyme catalyses decanoate + ATP + CoA = decanoyl-CoA + AMP + diphosphate. The catalysed reaction is dodecanoate + ATP + CoA = dodecanoyl-CoA + AMP + diphosphate. It carries out the reaction tetradecanoate + ATP + CoA = tetradecanoyl-CoA + AMP + diphosphate. It catalyses the reaction hexadecanoate + ATP + CoA = hexadecanoyl-CoA + AMP + diphosphate. The enzyme catalyses octadecanoate + ATP + CoA = octadecanoyl-CoA + AMP + diphosphate. The catalysed reaction is 9-decenoate + ATP + CoA = 9-decenoyl-CoA + AMP + diphosphate. It carries out the reaction (9Z)-octadecenoate + ATP + CoA = (9Z)-octadecenoyl-CoA + AMP + diphosphate. It catalyses the reaction 2-hydroxyhexadecanoate + ATP + CoA = 2-hydroxyhexadecanoyl-CoA + AMP + diphosphate. The enzyme catalyses 3-hydroxytetradecanoate + ATP + CoA = 3-hydroxytetradecanoyl-CoA + AMP + diphosphate. The catalysed reaction is 12-hydroxyoctadecanoate + ATP + CoA = 12-hydroxyoctadecanoyl-CoA + AMP + diphosphate. It carries out the reaction 15-hydroxypentadecanoate + ATP + CoA = 15-hydroxypentadecanoyl-CoA + AMP + diphosphate. It catalyses the reaction 16-hydroxyhexadecanoate + ATP + CoA = 16-hydroxyhexadecanoyl-CoA + AMP + diphosphate. The enzyme catalyses 2-methylhexadecanoate + ATP + CoA = 2-methylhexadecanoyl-CoA + AMP + diphosphate. The catalysed reaction is 3-methylundecanoate + ATP + CoA = 3-methylundecanoyl-CoA + AMP + diphosphate. It carries out the reaction 12-methyltridecanoate + ATP + CoA = 12-methyltridecanoyl-CoA + AMP + diphosphate. It catalyses the reaction 12-methyloctadecanoate + ATP + CoA = 12-methyloctadecanoyl-CoA + AMP + diphosphate. Functionally, catalyzes the activation of medium/long-chain fatty acids as acyl-coenzyme A (acyl-CoA). May play a role in the uptake of fatty acids by trapping them metabolically as CoA esters. May also play an important role in the channeling of fatty acids into triacylglycerol (TAG) for use by Mycobacterium during its dormancy. The chain is Medium/long-chain-fatty-acid--CoA ligase FadD6 from Mycobacterium tuberculosis (strain ATCC 25618 / H37Rv).